A 334-amino-acid chain; its full sequence is Glutaminase (334 aa).

Substrate-binding residues include Ser-76, Asn-126, Glu-170, Asn-177, Tyr-201, Tyr-253, and Val-271.

It belongs to the glutaminase family. Homotetramer.

The enzyme catalyses L-glutamine + H2O = L-glutamate + NH4(+). The chain is Glutaminase from Nostoc sp. (strain PCC 7120 / SAG 25.82 / UTEX 2576).